The sequence spans 483 residues: 1-aminocyclopropane-1-carboxylate synthase 2 (483 aa).

Lys-275 carries the post-translational modification N6-(pyridoxal phosphate)lysine.

Belongs to the class-I pyridoxal-phosphate-dependent aminotransferase family. Pyridoxal 5'-phosphate serves as cofactor.

It carries out the reaction S-adenosyl-L-methionine = 1-aminocyclopropane-1-carboxylate + S-methyl-5'-thioadenosine + H(+). Its pathway is alkene biosynthesis; ethylene biosynthesis via S-adenosyl-L-methionine; ethylene from S-adenosyl-L-methionine: step 1/2. Functionally, catalyzes the formation of 1-aminocyclopropane-1-carboxylate, a direct precursor of ethylene in higher plants. Involved in defense response by producing ethylene after pathogen infection. Involved in several phosphate deficiency-induced adaptive responses, such as lateral root elongation. This is 1-aminocyclopropane-1-carboxylate synthase 2 from Oryza sativa subsp. japonica (Rice).